Here is a 37-residue protein sequence, read N- to C-terminus: Large ribosomal subunit protein bL36 (37 aa).

The protein belongs to the bacterial ribosomal protein bL36 family.

In Nitratidesulfovibrio vulgaris (strain ATCC 29579 / DSM 644 / CCUG 34227 / NCIMB 8303 / VKM B-1760 / Hildenborough) (Desulfovibrio vulgaris), this protein is Large ribosomal subunit protein bL36.